Consider the following 275-residue polypeptide: Autophagy-related protein 5 (275 aa).

K129 is covalently cross-linked (Glycyl lysine isopeptide (Lys-Gly) (interchain with G-Cter in lgg-3/ATG12)). Positions 221 to 231 (LSSSSSSSTDS) are enriched in low complexity. The tract at residues 221–241 (LSSSSSSSTDSQSEHPPRLIS) is disordered.

This sequence belongs to the ATG5 family. Most likely a component of a complex at least containing atg-5, lgg-3/ATG12, atg-16.1 and/or atg-16.2. Interacts with lgg-3/ATG12. Interacts with atg-16.1 (via N-terminus) and atg-16.2 (via N-terminus). In terms of processing, conjugated to lgg-3/ATG12; which is essential for autophagy.

It is found in the preautophagosomal structure membrane. Its function is as follows. Involved in autophagic vesicle formation. Conjugation with lgg-3/ATG12, through a ubiquitin-like conjugating system involving atg-7 as an E1-like activating enzyme and atg-10 as an E2-like conjugating enzyme, is essential for its function. Most likely a component of an atg-5-lgg-3-atg-16 complex that promotes autophagosome formation by associating with lgg-2, but not lgg-1, at the preautophagosomal membrane. Probably, as part of an atg-5-lgg-3-atg-16 complex, required for lgg-1 lipidation; the complex acts as an E3-like enzyme promoting atg-3-mediated lgg-1 lipidation. Furthermore, association with atg-16.2 is required for the nucleation of lgg-1 positive autophagic vesicles. The polypeptide is Autophagy-related protein 5 (Caenorhabditis elegans).